A 278-amino-acid polypeptide reads, in one-letter code: Tryptophan synthase alpha chain (278 aa).

Catalysis depends on proton acceptor residues glutamate 50 and aspartate 61.

Belongs to the TrpA family. In terms of assembly, tetramer of two alpha and two beta chains.

The enzyme catalyses (1S,2R)-1-C-(indol-3-yl)glycerol 3-phosphate + L-serine = D-glyceraldehyde 3-phosphate + L-tryptophan + H2O. The protein operates within amino-acid biosynthesis; L-tryptophan biosynthesis; L-tryptophan from chorismate: step 5/5. In terms of biological role, the alpha subunit is responsible for the aldol cleavage of indoleglycerol phosphate to indole and glyceraldehyde 3-phosphate. The protein is Tryptophan synthase alpha chain of Afipia carboxidovorans (strain ATCC 49405 / DSM 1227 / KCTC 32145 / OM5) (Oligotropha carboxidovorans).